The primary structure comprises 85 residues: Small ribosomal subunit protein uS17 (85 aa).

Belongs to the universal ribosomal protein uS17 family. As to quaternary structure, part of the 30S ribosomal subunit.

Functionally, one of the primary rRNA binding proteins, it binds specifically to the 5'-end of 16S ribosomal RNA. The protein is Small ribosomal subunit protein uS17 of Anaeromyxobacter dehalogenans (strain 2CP-1 / ATCC BAA-258).